We begin with the raw amino-acid sequence, 386 residues long: LL-diaminopimelate aminotransferase (386 aa).

Tyr-13 and Gly-38 together coordinate substrate. Pyridoxal 5'-phosphate is bound by residues Tyr-67, 101–102 (SK), Tyr-126, Asn-176, Tyr-207, and 235–237 (SLS). Positions 102, 126, and 176 each coordinate substrate. Lys-238 carries the N6-(pyridoxal phosphate)lysine modification. Arg-246 contacts pyridoxal 5'-phosphate. Arg-364 serves as a coordination point for substrate.

The protein belongs to the class-I pyridoxal-phosphate-dependent aminotransferase family. LL-diaminopimelate aminotransferase subfamily. As to quaternary structure, homodimer. The cofactor is pyridoxal 5'-phosphate.

It carries out the reaction (2S,6S)-2,6-diaminopimelate + 2-oxoglutarate = (S)-2,3,4,5-tetrahydrodipicolinate + L-glutamate + H2O + H(+). The protein operates within amino-acid biosynthesis; L-lysine biosynthesis via DAP pathway; LL-2,6-diaminopimelate from (S)-tetrahydrodipicolinate (aminotransferase route): step 1/1. Involved in the synthesis of meso-diaminopimelate (m-DAP or DL-DAP), required for both lysine and peptidoglycan biosynthesis. Catalyzes the direct conversion of tetrahydrodipicolinate to LL-diaminopimelate. The chain is LL-diaminopimelate aminotransferase from Natranaerobius thermophilus (strain ATCC BAA-1301 / DSM 18059 / JW/NM-WN-LF).